The following is a 566-amino-acid chain: Membrane protein insertase YidC (566 aa).

A helical transmembrane segment spans residues 6–26 (NLLLLALLFVSFLLYTAWVEE). Positions 30-80 (QVAPQVQTEQVDSSVPASVASSANSANLSDGVPNSPQQSSTDATSTELPAS) are disordered. Positions 31 to 41 (VAPQVQTEQVD) are enriched in polar residues. Over residues 42-58 (SSVPASVASSANSANLS) the composition is skewed to low complexity. A compositionally biased stretch (polar residues) spans 61–80 (VPNSPQQSSTDATSTELPAS). The next 4 helical transmembrane spans lie at 356-376 (LLLF…LITF), 433-453 (LGGC…YWSL), 471-491 (LSVQ…MFFI), and 510-530 (FMPV…VLYW).

It belongs to the OXA1/ALB3/YidC family. Type 1 subfamily. In terms of assembly, interacts with the Sec translocase complex via SecD. Specifically interacts with transmembrane segments of nascent integral membrane proteins during membrane integration.

The protein resides in the cell inner membrane. Functionally, required for the insertion and/or proper folding and/or complex formation of integral membrane proteins into the membrane. Involved in integration of membrane proteins that insert both dependently and independently of the Sec translocase complex, as well as at least some lipoproteins. Aids folding of multispanning membrane proteins. The protein is Membrane protein insertase YidC of Psychromonas ingrahamii (strain DSM 17664 / CCUG 51855 / 37).